The sequence spans 566 residues: Phenylalanine--tRNA ligase beta subunit (566 aa).

In terms of domain architecture, B5 spans 287-362 (YFQEEVEFNV…IGEGLSSFNP (76 aa)). Mg(2+)-binding residues include Asp340, Asp346, Glu349, and Asp350.

Belongs to the phenylalanyl-tRNA synthetase beta subunit family. Type 2 subfamily. Tetramer of two alpha and two beta subunits. The cofactor is Mg(2+).

Its subcellular location is the cytoplasm. The enzyme catalyses tRNA(Phe) + L-phenylalanine + ATP = L-phenylalanyl-tRNA(Phe) + AMP + diphosphate + H(+). This is Phenylalanine--tRNA ligase beta subunit from Borreliella burgdorferi (strain ZS7) (Borrelia burgdorferi).